A 108-amino-acid polypeptide reads, in one-letter code: MNCPLSLQIVNVSYIVNTNSCSWIAFNNSKYPIKTIKINIININILGKINHMVIFCDNNIVIILWKIMVVIISSIIHRTYIRRWISRRNNIRRKASHACKQPNNTTGC.

The helical transmembrane segment at 59-81 threads the bilayer; sequence NIVIILWKIMVVIISSIIHRTYI.

The protein resides in the membrane. This is an uncharacterized protein from Rickettsia conorii (strain ATCC VR-613 / Malish 7).